The primary structure comprises 100 residues: Urease subunit gamma (100 aa).

This sequence belongs to the urease gamma subunit family. Heterotrimer of UreA (gamma), UreB (beta) and UreC (alpha) subunits. Three heterotrimers associate to form the active enzyme.

It localises to the cytoplasm. It catalyses the reaction urea + 2 H2O + H(+) = hydrogencarbonate + 2 NH4(+). The protein operates within nitrogen metabolism; urea degradation; CO(2) and NH(3) from urea (urease route): step 1/1. The polypeptide is Urease subunit gamma (Yersinia rohdei).